Here is a 111-residue protein sequence, read N- to C-terminus: Ig kappa chain V-III region PC 6684 (111 aa).

The framework-1 stretch occupies residues 1–23 (DIVLTQSPASLAVSLGQRATISC). C23 and C92 are oxidised to a cystine. A complementarity-determining-1 region spans residues 24–38 (RASKSVSTSGYSYMH). A framework-2 region spans residues 39-53 (WYQQKPGQPPKLLIY). The tract at residues 54-60 (LASNLES) is complementarity-determining-2. The interval 61–92 (GVPARFSGSGSGTDFTLNIHPVEEEDAATYYC) is framework-3. Residues 93 to 101 (QHSRELPRT) form a complementarity-determining-3 region. The interval 102–111 (FGGGTKLEIK) is framework-4.

In Mus musculus (Mouse), this protein is Ig kappa chain V-III region PC 6684.